The chain runs to 104 residues: NADH-quinone oxidoreductase subunit K (104 aa).

The next 3 helical transmembrane spans lie at 7-27, 31-51, and 63-83; these read PDMA…GVLV, LLFM…AFVA, and VMFL…LAIL.

This sequence belongs to the complex I subunit 4L family. As to quaternary structure, NDH-1 is composed of 14 different subunits. Subunits NuoA, H, J, K, L, M, N constitute the membrane sector of the complex.

It localises to the cell inner membrane. The catalysed reaction is a quinone + NADH + 5 H(+)(in) = a quinol + NAD(+) + 4 H(+)(out). Its function is as follows. NDH-1 shuttles electrons from NADH, via FMN and iron-sulfur (Fe-S) centers, to quinones in the respiratory chain. The immediate electron acceptor for the enzyme in this species is believed to be ubiquinone. Couples the redox reaction to proton translocation (for every two electrons transferred, four hydrogen ions are translocated across the cytoplasmic membrane), and thus conserves the redox energy in a proton gradient. The chain is NADH-quinone oxidoreductase subunit K from Gluconacetobacter diazotrophicus (strain ATCC 49037 / DSM 5601 / CCUG 37298 / CIP 103539 / LMG 7603 / PAl5).